The following is a 620-amino-acid chain: Leucine-rich repeat and immunoglobulin-like domain-containing nogo receptor-interacting protein 1 (620 aa).

Positions 1–41 (MQVSKRMLAGGVRSMPSPLLACWQPILLLVLGSVLSGSATG) are cleaved as a signal peptide. 2 disulfides stabilise this stretch: Cys42-Cys48 and Cys46-Cys57. In terms of domain architecture, LRRNT spans 42–71 (CPPRCECSAQDRAVLCHRKRFVAVPEGIPT). Residues 42-561 (CPPRCECSAQ…FDIKTLIIAT (520 aa)) are Extracellular-facing. 11 LRR repeats span residues 72–93 (ETRL…EFAS), 96–117 (HLEE…AFNN), 120–141 (NLRT…VFTG), 144–165 (NLTK…MFQD), 168–189 (NLKS…AFSG), 192–213 (SLEQ…ALSH), 216–237 (GLIV…SFKR), 264–285 (NLTS…AVRH), 288–309 (YLRF…MLHE), 312–333 (RLQE…AFRG), and 336–357 (YLRV…VFHS). Asn144 carries N-linked (GlcNAc...) asparagine glycosylation. The N-linked (GlcNAc...) asparagine glycan is linked to Asn202. Residues Asn264, Asn274, and Asn293 are each glycosylated (N-linked (GlcNAc...) asparagine). An N-linked (GlcNAc...) asparagine glycan is attached at Asn341. Positions 369 to 423 (NPLACDCRLLWVFRRRWRLNFNRQQPTCATPEFVQGKEFKDFPDVLLPNYFTCRR) constitute an LRRCT domain. 3 disulfides stabilise this stretch: Cys373–Cys396, Cys375–Cys421, and Cys446–Cys497. Residues 411-513 (PDVLLPNYFT…GNDSMPAHLH (103 aa)) enclose the Ig-like C2-type domain. N-linked (GlcNAc...) asparagine glycans are attached at residues Asn492, Asn505, Asn526, and Asn542. The chain crosses the membrane as a helical span at residues 562 to 582 (TMGFISFLGVVLFCLVLLFLW). Over 583–620 (SRGKGNTKHNIEIEYVPRKSDAGISSADAPRKFNMKMI) the chain is Cytoplasmic. The residue at position 602 (Ser602) is a Phosphoserine.

Homotetramer. Forms a ternary complex with RTN4R/NGFR and RTN4R/TNFRSF19. Interacts with NGRF and MYT1L. Interacts with RTN4R. In terms of processing, N-glycosylated. Contains predominantly high-mannose glycans. In terms of tissue distribution, expressed exclusively in the central nervous system. Highest level in the in amygdala, hippocampus, thalamus and cerebral cortex. In the rest of the brain a basal expression seems to be always present. Up-regulated in substantia nigra neurons from Parkinson disease patients.

The protein resides in the cell membrane. Its function is as follows. Functional component of the Nogo receptor signaling complex (RTN4R/NGFR) in RhoA activation responsible for some inhibition of axonal regeneration by myelin-associated factors. Is also an important negative regulator of oligodentrocyte differentiation and axonal myelination. Acts in conjunction with RTN4 and RTN4R in regulating neuronal precursor cell motility during cortical development. This is Leucine-rich repeat and immunoglobulin-like domain-containing nogo receptor-interacting protein 1 (LINGO1) from Homo sapiens (Human).